A 1083-amino-acid chain; its full sequence is Ubiquitin-protein ligase E3C (1083 aa).

Composition is skewed to basic and acidic residues over residues 1–10 (MFSFEGDFKT) and 20–40 (SRKEEKASLLHRTQEERRKRE). Residues 1–40 (MFSFEGDFKTRPKVSLGGASRKEEKASLLHRTQEERRKRE) are disordered. Residues 1–60 (MFSFEGDFKTRPKVSLGGASRKEEKASLLHRTQEERRKREEERRRLKNAIIIQSFIRGYR) are cis-determinant of acceptor ubiquitin-binding. The 30-residue stretch at 45-74 (RLKNAIIIQSFIRGYRDRKQQYSIQRSAFD) folds into the IQ domain. A disordered region spans residues 355 to 385 (SPASASCHDSASDSEEESEEADKPSSPEDGR). Positions 375–385 (ADKPSSPEDGR) are enriched in basic and acidic residues. The HECT domain occupies 744-1083 (NEPDLKKRIR…IECAAGFELS (340 aa)). A Glycyl lysine isopeptide (Lys-Gly) (interchain with G-Cter in ubiquitin); by autocatalysis cross-link involves residue Lys-903. Cys-1051 serves as the catalytic Glycyl thioester intermediate.

This sequence belongs to the UBE3C family. In terms of assembly, interacts with 26S proteasomes. Interacts (via the HECT domain) with UBE2D1 and, less efficiently, with UBE2L3. Post-translationally, autoubiquitinated; promoting its own degradation. Highly expressed in skeletal muscle. Detected at much lower levels in kidney and pancreas.

It carries out the reaction S-ubiquitinyl-[E2 ubiquitin-conjugating enzyme]-L-cysteine + [acceptor protein]-L-lysine = [E2 ubiquitin-conjugating enzyme]-L-cysteine + N(6)-ubiquitinyl-[acceptor protein]-L-lysine.. It participates in protein modification; protein ubiquitination. In terms of biological role, E3 ubiquitin-protein ligase that specifically catalyzes 'Lys-29'- and 'Lys-48'-linked polyubiquitin chains. Accepts ubiquitin from the E2 ubiquitin-conjugating enzyme UBE2D1 in the form of a thioester and then directly transfers the ubiquitin to targeted substrates. Associates with the proteasome and promotes elongation of ubiquitin chains on substrates bound to the 26S proteasome. Also catalyzes 'Lys-29'- and 'Lys-48'-linked ubiquitination of 26S proteasome subunit ADRM1/RPN13 in response to proteotoxic stress, impairing the ability of the proteasome to bind and degrade ubiquitin-conjugated proteins. Acts as a negative regulator of autophagy by mediating 'Lys-29'- and 'Lys-48'-linked ubiquitination of PIK3C3/VPS34, promoting its degradation. Can assemble unanchored poly-ubiquitin chains in either 'Lys-29'- or 'Lys-48'-linked polyubiquitin chains; with some preference for 'Lys-48' linkages. Acts as a negative regulator of type I interferon by mediating 'Lys-48'-linked ubiquitination of IRF3 and IRF7, leading to their degradation by the proteasome. Catalyzes ubiquitination and degradation of CAND2. This is Ubiquitin-protein ligase E3C from Homo sapiens (Human).